Consider the following 310-residue polypeptide: Protoheme IX farnesyltransferase (310 aa).

9 helical membrane passes run 26-46 (VMSL…ATVH), 47-67 (PMIA…SGAL), 95-115 (GEAL…LGLA), 118-138 (LFAA…YSMW), 147-167 (IVIG…VATG), 174-194 (LFMF…LALF), 220-240 (VLAY…TGIG), 243-263 (LYLV…VRIW), and 281-301 (FFRF…AEAA).

It belongs to the UbiA prenyltransferase family. Protoheme IX farnesyltransferase subfamily. Interacts with CtaA.

It is found in the cell inner membrane. The catalysed reaction is heme b + (2E,6E)-farnesyl diphosphate + H2O = Fe(II)-heme o + diphosphate. The protein operates within porphyrin-containing compound metabolism; heme O biosynthesis; heme O from protoheme: step 1/1. In terms of biological role, converts heme B (protoheme IX) to heme O by substitution of the vinyl group on carbon 2 of heme B porphyrin ring with a hydroxyethyl farnesyl side group. The sequence is that of Protoheme IX farnesyltransferase from Cereibacter sphaeroides (strain ATCC 17025 / ATH 2.4.3) (Rhodobacter sphaeroides).